The following is a 349-amino-acid chain: Protein RecA (349 aa).

65-72 is a binding site for ATP; the sequence is GPESSGKT. Residues 329 to 349 form a disordered region; the sequence is KASDQTAAHDETEEEPDLLES. Positions 339-349 are enriched in acidic residues; it reads ETEEEPDLLES.

It belongs to the RecA family.

The protein resides in the cytoplasm. Can catalyze the hydrolysis of ATP in the presence of single-stranded DNA, the ATP-dependent uptake of single-stranded DNA by duplex DNA, and the ATP-dependent hybridization of homologous single-stranded DNAs. It interacts with LexA causing its activation and leading to its autocatalytic cleavage. This chain is Protein RecA, found in Acinetobacter baylyi (strain ATCC 33305 / BD413 / ADP1).